A 461-amino-acid polypeptide reads, in one-letter code: MGKITKFVKSKVCNSTNRAFPLIVNHHTMASFQIQIISETLIKPSSPTPPSLKQHQLSDYDKTMHHMYTPVAFLYTSHGHGIPSTDEVSQLLKNSLSKTLKHYSHFAGRLVGDSHVDCNDMGVKLLEVRVRCPMAEVLKRPNTDAQDLVYPKGLPWSMAKEDILVVAQISYFDCGGIAVSADISHKIVDVASITTFMNDWAAMARNSSYKPSPQIVSPTILKMDDVPATAEDDNMKENICQSRRFLFHDSKIAELKALAVNSGAENPTRVELVTAILHKCAVTASTAALGSFMPNILLLAVNLRSIISPPLAKTSIGNMSSCYAISATHENRMKFPLLAGELRRSKIKLFQKYGKQLNESELLFLNSTDKAHESQKLSDGDNFDCFIFSSLCRSPFYEVDFGWGRPVLVYVPNCPFKNTFFLIDTPTQDGIEALVTLEENVMQIFENDEGLLAFASLIKDS.

Active-site proton acceptor residues include His185 and Asp400.

Belongs to the plant acyltransferase family. Monomer.

It is found in the cytoplasm. It carries out the reaction 17,18-epoxy-17-hydroxycur-19-ene + acetyl-CoA = diaboline + CoA. Its pathway is alkaloid biosynthesis. Its function is as follows. Acetyltransferase involved in the biosynthesis of curare monoterpene indole alkaloids (MIAs), natural products such as diaboline, a pharmacologically active compound used to regulate blood pressure. Curare alkaloids act as animal glycine receptor antagonists. Catalyzes the conversion of 17,18-epoxy-17-hydroxycur-19-ene (Wieland-Gumlich aldehyde) to diaboline. The polypeptide is Diaboline synthase (Strychnos sp).